The sequence spans 208 residues: Small ribosomal subunit protein eS1 (208 aa).

Belongs to the eukaryotic ribosomal protein eS1 family.

This chain is Small ribosomal subunit protein eS1, found in Saccharolobus solfataricus (strain ATCC 35092 / DSM 1617 / JCM 11322 / P2) (Sulfolobus solfataricus).